We begin with the raw amino-acid sequence, 134 residues long: DNA-directed RNA polymerase subunit omega (134 aa).

This sequence belongs to the RNA polymerase subunit omega family. The RNAP catalytic core consists of 2 alpha, 1 beta, 1 beta' and 1 omega subunit. When a sigma factor is associated with the core the holoenzyme is formed, which can initiate transcription.

The catalysed reaction is RNA(n) + a ribonucleoside 5'-triphosphate = RNA(n+1) + diphosphate. Promotes RNA polymerase assembly. Latches the N- and C-terminal regions of the beta' subunit thereby facilitating its interaction with the beta and alpha subunits. The protein is DNA-directed RNA polymerase subunit omega of Brucella anthropi (strain ATCC 49188 / DSM 6882 / CCUG 24695 / JCM 21032 / LMG 3331 / NBRC 15819 / NCTC 12168 / Alc 37) (Ochrobactrum anthropi).